The following is a 102-amino-acid chain: Small ribosomal subunit protein uS10 (102 aa).

Belongs to the universal ribosomal protein uS10 family. As to quaternary structure, part of the 30S ribosomal subunit.

Its function is as follows. Involved in the binding of tRNA to the ribosomes. The chain is Small ribosomal subunit protein uS10 from Geobacter metallireducens (strain ATCC 53774 / DSM 7210 / GS-15).